We begin with the raw amino-acid sequence, 418 residues long: MKKVYFKTFGCRTNLFDTQVMSENLKDFSTTLEEQEADIIIINSCTVTNGADSAVRSYAKKMARLDKEVLFTGCGVKTQGKELFEKGFLKGVFGHDNKEKINALLQEKKRFFIDDNLENKHLDTTMVSEFVGKTRAFIKIQEGCDFDCNYCIIPSVRGRARSFEERKILEQVGLLCSKGVQEVVLTGTNVGSYGKDRGSNIARLIKKLSQIAGLKRIRIGSLEPNQINDEFLELLEEDFLEKHLHIALQHSHDLMLERMNRRNRTKSDRELLETIASKNFAIGTDFIVGHPGESGSVFEKAFKNLESLPLTHIHPFIYSKRKDTPSSLMTDSVSLEDSKKRLNAIKDLIFHKNKAFRQLQLKLNTPLKALVEVQKDGEFKALDQFFNPIKIKSDKPLRASFLEIKEYEIKERENHAVF.

The MTTase N-terminal domain occupies 2 to 110 (KKVYFKTFGC…INALLQEKKR (109 aa)). [4Fe-4S] cluster is bound by residues Cys-11, Cys-45, Cys-74, Cys-144, Cys-148, and Cys-151. Residues 130–355 (FVGKTRAFIK…KDLIFHKNKA (226 aa)) enclose the Radical SAM core domain.

The protein belongs to the methylthiotransferase family. The cofactor is [4Fe-4S] cluster.

The protein is Putative methylthiotransferase HP_0285 of Helicobacter pylori (strain ATCC 700392 / 26695) (Campylobacter pylori).